Here is a 249-residue protein sequence, read N- to C-terminus: Esterase YjfP (249 aa).

In terms of biological role, displays esterase activity toward palmitoyl-CoA and pNP-butyrate. This chain is Esterase YjfP (yjfP), found in Escherichia coli (strain K12).